We begin with the raw amino-acid sequence, 230 residues long: Demethylmenaquinone methyltransferase (230 aa).

S-adenosyl-L-methionine-binding positions include T62, D80, 100–101 (DA), and S117.

The protein belongs to the class I-like SAM-binding methyltransferase superfamily. MenG/UbiE family.

The enzyme catalyses a 2-demethylmenaquinol + S-adenosyl-L-methionine = a menaquinol + S-adenosyl-L-homocysteine + H(+). It functions in the pathway quinol/quinone metabolism; menaquinone biosynthesis; menaquinol from 1,4-dihydroxy-2-naphthoate: step 2/2. In terms of biological role, methyltransferase required for the conversion of demethylmenaquinol (DMKH2) to menaquinol (MKH2). The polypeptide is Demethylmenaquinone methyltransferase (Mycolicibacterium paratuberculosis (strain ATCC BAA-968 / K-10) (Mycobacterium paratuberculosis)).